The following is a 609-amino-acid chain: Chaperone protein DnaK (609 aa).

Thr173 carries the post-translational modification Phosphothreonine; by autocatalysis. Positions 580 to 609 are disordered; the sequence is QAAQGGGAEGQEPKKDNVVDADYEVVDDKK. Positions 598 to 609 are enriched in acidic residues; the sequence is VDADYEVVDDKK.

It belongs to the heat shock protein 70 family.

Functionally, acts as a chaperone. This chain is Chaperone protein DnaK, found in Brevibacillus brevis (strain 47 / JCM 6285 / NBRC 100599).